The sequence spans 74 residues: Translational regulator CsrA (74 aa).

Belongs to the CsrA/RsmA family. As to quaternary structure, homodimer; the beta-strands of each monomer intercalate to form a hydrophobic core, while the alpha-helices form wings that extend away from the core.

The protein resides in the cytoplasm. Its function is as follows. A translational regulator that binds mRNA to regulate translation initiation and/or mRNA stability. Usually binds in the 5'-UTR at or near the Shine-Dalgarno sequence preventing ribosome-binding, thus repressing translation. Its main target seems to be the major flagellin gene, while its function is anatagonized by FliW. The sequence is that of Translational regulator CsrA from Oceanobacillus iheyensis (strain DSM 14371 / CIP 107618 / JCM 11309 / KCTC 3954 / HTE831).